Consider the following 231-residue polypeptide: Ribonuclease HII (231 aa).

The RNase H type-2 domain occupies 32–223; sequence WPVAGMDEAG…FRLGGTEVVE (192 aa). A divalent metal cation contacts are provided by Asp-38, Glu-39, and Asp-130.

Belongs to the RNase HII family. Requires Mn(2+) as cofactor. Mg(2+) serves as cofactor.

It localises to the cytoplasm. It carries out the reaction Endonucleolytic cleavage to 5'-phosphomonoester.. Functionally, endonuclease that specifically degrades the RNA of RNA-DNA hybrids. This chain is Ribonuclease HII, found in Mesorhizobium japonicum (strain LMG 29417 / CECT 9101 / MAFF 303099) (Mesorhizobium loti (strain MAFF 303099)).